Consider the following 306-residue polypeptide: Aspartate carbamoyltransferase catalytic subunit (306 aa).

Residues arginine 51 and threonine 52 each coordinate carbamoyl phosphate. Lysine 80 contributes to the L-aspartate binding site. Arginine 101, histidine 129, and glutamine 132 together coordinate carbamoyl phosphate. Positions 162 and 224 each coordinate L-aspartate. Residues leucine 263 and proline 264 each coordinate carbamoyl phosphate.

It belongs to the aspartate/ornithine carbamoyltransferase superfamily. ATCase family. In terms of assembly, heterododecamer (2C3:3R2) of six catalytic PyrB chains organized as two trimers (C3), and six regulatory PyrI chains organized as three dimers (R2).

It catalyses the reaction carbamoyl phosphate + L-aspartate = N-carbamoyl-L-aspartate + phosphate + H(+). It participates in pyrimidine metabolism; UMP biosynthesis via de novo pathway; (S)-dihydroorotate from bicarbonate: step 2/3. In terms of biological role, catalyzes the condensation of carbamoyl phosphate and aspartate to form carbamoyl aspartate and inorganic phosphate, the committed step in the de novo pyrimidine nucleotide biosynthesis pathway. In Parabacteroides distasonis (strain ATCC 8503 / DSM 20701 / CIP 104284 / JCM 5825 / NCTC 11152), this protein is Aspartate carbamoyltransferase catalytic subunit.